A 35-amino-acid chain; its full sequence is Endochitinase 2 (35 aa).

This sequence belongs to the glycosyl hydrolase 19 family. Chitinase class I subfamily.

It catalyses the reaction Random endo-hydrolysis of N-acetyl-beta-D-glucosaminide (1-&gt;4)-beta-linkages in chitin and chitodextrins.. Its function is as follows. Defense against chitin-containing fungal pathogens. The sequence is that of Endochitinase 2 from Capsicum chinense (Scotch bonnet).